A 352-amino-acid chain; its full sequence is uncharacterized protein (352 aa).

The signal sequence occupies residues 1-21 (MNVDSRVFRFFLVFLILVVVA).

The protein belongs to the bacterial solute-binding protein 1 family. WtpA subfamily.

This is an uncharacterized protein from Methanosarcina acetivorans (strain ATCC 35395 / DSM 2834 / JCM 12185 / C2A).